The chain runs to 342 residues: Serpentine receptor class delta-33 (342 aa).

The next 7 membrane-spanning stretches (helical) occupy residues 26–46, 62–82, 112–132, 148–168, 205–225, 261–281, and 287–307; these read IFVI…LLLL, IFLA…VTSM, YVGI…SMIY, IILC…CSNI, LIIL…VMYW, IIPL…QLGF, and YSYF…VVTI.

It belongs to the nematode receptor-like protein srd family.

It localises to the membrane. This chain is Serpentine receptor class delta-33 (srd-33), found in Caenorhabditis elegans.